Reading from the N-terminus, the 184-residue chain is Lipid A acyltransferase PagP (184 aa).

The first 22 residues, 1-22 (MNIRHGIIAMSSTMLVPLAAEA), serve as a signal peptide directing secretion. Residues histidine 57, aspartate 100, and serine 101 contribute to the active site.

This sequence belongs to the lipid A palmitoyltransferase family. In terms of assembly, homodimer.

The protein resides in the cell outer membrane. It catalyses the reaction a lipid A + a 1,2-diacyl-sn-glycero-3-phosphocholine = a hepta-acyl lipid A + a 2-acyl-sn-glycero-3-phosphocholine. The enzyme catalyses a lipid IVA + a 1,2-diacyl-sn-glycero-3-phosphocholine = a lipid IVB + a 2-acyl-sn-glycero-3-phosphocholine. It carries out the reaction a lipid IIA + a 1,2-diacyl-sn-glycero-3-phosphocholine = a lipid IIB + a 2-acyl-sn-glycero-3-phosphocholine. In terms of biological role, transfers a fatty acid residue from the sn-1 position of a phospholipid to the N-linked hydroxyfatty acid chain on the proximal unit of lipid A or its precursors. This chain is Lipid A acyltransferase PagP, found in Methylobacillus flagellatus (strain ATCC 51484 / DSM 6875 / VKM B-1610 / KT).